An 874-amino-acid polypeptide reads, in one-letter code: Alanine--tRNA ligase (874 aa).

Zn(2+) contacts are provided by His-564, His-568, Cys-665, and His-669.

It belongs to the class-II aminoacyl-tRNA synthetase family. Zn(2+) serves as cofactor.

The protein resides in the cytoplasm. It catalyses the reaction tRNA(Ala) + L-alanine + ATP = L-alanyl-tRNA(Ala) + AMP + diphosphate. Catalyzes the attachment of alanine to tRNA(Ala) in a two-step reaction: alanine is first activated by ATP to form Ala-AMP and then transferred to the acceptor end of tRNA(Ala). Also edits incorrectly charged Ser-tRNA(Ala) and Gly-tRNA(Ala) via its editing domain. In Burkholderia vietnamiensis (strain G4 / LMG 22486) (Burkholderia cepacia (strain R1808)), this protein is Alanine--tRNA ligase.